The primary structure comprises 425 residues: CBS domain-containing protein CBSX6 (425 aa).

The 75-residue stretch at 16–90 (GKPEMVEFYE…FLAKTECLQE (75 aa)) folds into the CBS 1 domain. The span at 159-172 (SENSSSSSGLSADS) shows a compositional bias: low complexity. The tract at residues 159–182 (SENSSSSSGLSADSTNRPTTSMTS) is disordered. Positions 173-182 (TNRPTTSMTS) are enriched in polar residues. Transmembrane regions (helical) follow at residues 200–220 (IGVL…LGII) and 275–295 (YLAA…MGVE). One can recognise a CBS 2 domain in the interval 347 to 409 (MYRGRSAPLT…TAVTKQPSAF (63 aa)).

The protein resides in the vacuole membrane. The polypeptide is CBS domain-containing protein CBSX6 (CBSX6) (Arabidopsis thaliana (Mouse-ear cress)).